The primary structure comprises 346 residues: MAFPFTSIVGQEEMKLSLILNIIDPRIGGVLVMGHRGTGKSTTVRALAEVLPLIDRVKGDIYNRTVEQYIEMESGVKGAPVLKASDVKTEKIPVPVVDLPLGATEDRVCGTIDIEKALTSGVKAFEPGLLAQANRGFLYIDEVNLLDDHLVDVLLDVAASGKNVVEREGISIRHPARFVLVGSGNPEEGELRPQLLDRFGLHARIITINDVAKRVEIVKLRREYDENPEAFLKKVVRQQQKLQKEIVAAQKLLPKVSMDDSVLTDIARLCMALGIDGHRGELTITRTAHAFAALQGDTNVTMEHVRKIAGLCLRHRLRKDPLETVDAGEKIDRELAKVLGEAEVAA.

G34–S41 lines the ATP pocket.

The protein belongs to the Mg-chelatase subunits D/I family.

The enzyme catalyses protoporphyrin IX + Mg(2+) + ATP + H2O = Mg-protoporphyrin IX + ADP + phosphate + 3 H(+). The protein operates within porphyrin-containing compound metabolism; bacteriochlorophyll biosynthesis. In terms of biological role, involved in bacteriochlorophyll biosynthesis; introduces a magnesium ion into protoporphyrin IX to yield Mg-protoporphyrin IX. This is Magnesium-chelatase 38 kDa subunit (bchI) from Chlorobaculum parvum (strain DSM 263 / NCIMB 8327) (Chlorobium vibrioforme subsp. thiosulfatophilum).